The sequence spans 162 residues: Transcription elongation factor GreA (162 aa).

A coiled-coil region spans residues 44 to 72; the sequence is ENAEYHAAKEKQSHIERRIAELSDILSRA.

Belongs to the GreA/GreB family.

In terms of biological role, necessary for efficient RNA polymerase transcription elongation past template-encoded arresting sites. The arresting sites in DNA have the property of trapping a certain fraction of elongating RNA polymerases that pass through, resulting in locked ternary complexes. Cleavage of the nascent transcript by cleavage factors such as GreA or GreB allows the resumption of elongation from the new 3'terminus. GreA releases sequences of 2 to 3 nucleotides. This chain is Transcription elongation factor GreA, found in Nautilia profundicola (strain ATCC BAA-1463 / DSM 18972 / AmH).